The chain runs to 76 residues: Conotoxin Ca11b (76 aa).

The first 19 residues, 1-19, serve as a signal peptide directing secretion; that stretch reads MKLVLAIVVILMLLSLSTG. Positions 20-42 are excised as a propeptide; sequence AEMSDNHASMSANALRDRLLGPK. Intrachain disulfides connect Cys-46–Cys-60, Cys-53–Cys-65, Cys-59–Cys-69, and Cys-64–Cys-76.

In terms of tissue distribution, expressed by the venom duct.

It is found in the secreted. This is Conotoxin Ca11b from Conus caracteristicus (Characteristic cone).